Reading from the N-terminus, the 202-residue chain is GPI-anchored hemophore cfmB (202 aa).

The N-terminal stretch at 1–18 is a signal peptide; it reads MHFSRTSLILFAAGLASA. One can recognise a CFEM domain in the interval 19 to 108; it reads QLPNVPGCSL…STTASETATT (90 aa). 4 disulfide bridges follow: Cys-26/Cys-67, Cys-30/Cys-62, Cys-40/Cys-48, and Cys-50/Cys-83. Position 45 (Asp-45) interacts with heme. The segment at 94–171 is disordered; that stretch reads PVGAASTTAS…PSSQSTSASA (78 aa). Positions 97–171 are enriched in low complexity; it reads AASTTASETA…PSSQSTSASA (75 aa). Asn-180 is lipidated: GPI-anchor amidated asparagine. A propeptide spans 181–202 (removed in mature form); the sequence is AGSEKANVAGVVAVAAAALYLL.

Belongs to the RBT5 family. Post-translationally, the GPI-anchor is attached to the protein in the endoplasmic reticulum and serves to target the protein to the cell surface. There, the glucosamine-inositol phospholipid moiety is cleaved off and the GPI-modified mannoprotein is covalently attached via its lipidless GPI glycan remnant to the 1,6-beta-glucan of the outer cell wall layer.

It is found in the secreted. Its subcellular location is the cell wall. The protein resides in the cell membrane. Functionally, GPI-anchored cell wall protein involved in stabilizing the cell wall. Not implicated in virulence, heme uptake and biofilm formation. This is GPI-anchored hemophore cfmB from Aspergillus fumigatus (strain ATCC MYA-4609 / CBS 101355 / FGSC A1100 / Af293) (Neosartorya fumigata).